A 135-amino-acid chain; its full sequence is ATP synthase epsilon chain (135 aa).

Belongs to the ATPase epsilon chain family. As to quaternary structure, F-type ATPases have 2 components, CF(1) - the catalytic core - and CF(0) - the membrane proton channel. CF(1) has five subunits: alpha(3), beta(3), gamma(1), delta(1), epsilon(1). CF(0) has three main subunits: a, b and c.

The protein localises to the cell inner membrane. Produces ATP from ADP in the presence of a proton gradient across the membrane. The sequence is that of ATP synthase epsilon chain from Rhodopseudomonas palustris (strain BisB18).